The following is a 213-amino-acid chain: T-cell surface glycoprotein CD8 beta chain (213 aa).

Residues methionine 1–alanine 21 form the signal peptide. One can recognise an Ig-like V-type domain in the interval leucine 22–leucine 133. The Extracellular portion of the chain corresponds to leucine 22–threonine 175. Asparagine 34 carries N-linked (GlcNAc...) asparagine glycosylation. Cysteines 41 and 117 form a disulfide. The helical transmembrane segment at leucine 176–phenylalanine 196 threads the bilayer. Residues tyrosine 197–lysine 213 are Cytoplasmic-facing.

Forms disulfide-linked heterodimers with CD8A at the cell surface. Interacts with CD3D; this interaction couples TCR-CD3 with CD8. Interacts with LCK. Post-translationally, palmitoylated at the cytoplasmic tail and thereby targets the heterodimer CD8A/CD8B to lipid rafts unlike CD8A homodimers.

The protein localises to the membrane. Functionally, integral membrane glycoprotein that plays an essential role in the immune response and serves multiple functions in responses against both external and internal offenses. In T-cells, functions primarily as a coreceptor for MHC class I molecule:peptide complex. The antigens presented by class I peptides are derived from cytosolic proteins while class II derived from extracellular proteins. Interacts simultaneously with the T-cell receptor (TCR) and the MHC class I proteins presented by antigen presenting cells (APCs). In turn, recruits the Src kinase LCK to the vicinity of the TCR-CD3 complex. A palmitoylation site in the cytoplasmic tail of CD8B chain contributes to partitioning of CD8 into the plasma membrane lipid rafts where signaling proteins are enriched. Once LCK recruited, it initiates different intracellular signaling pathways by phosphorylating various substrates ultimately leading to lymphokine production, motility, adhesion and activation of cytotoxic T-lymphocytes (CTLs). Additionally, plays a critical role in thymic selection of CD8+ T-cells. The chain is T-cell surface glycoprotein CD8 beta chain (Cd8b) from Mus musculus (Mouse).